The chain runs to 289 residues: MSGFSTEERAAPFSLEYRVFLKNEKGQYISPFHDIPIYADKDVFHMVVEVPRWSNAKMEIATKDPLNPIKQDVKKRKLRYVANLFPYKGYIWNYGAIPQTWEDPGHNDKHTGCCGDNDPIDVCEIGSKVCARGEIIGVKVLGILAMIDEGETDWKVIAINMDDPDAANYNDINDVKRLKPGYLEATVDWFRRYKVPDGKPENEFAFNAEFKDKDFAIDIIKSTHDHWKALVTKKTNGKGISCMNTTVSESPLKCDPDAARAIVDALPPPCESACTVPTDVDKWFHHQKN.

Serine 2 is modified (N-acetylserine). Lysine 57 carries the N6-acetyllysine modification. Mg(2+)-binding residues include aspartate 116, aspartate 121, and aspartate 153. Position 228 is an N6-acetyllysine (lysine 228). Position 250 is a phosphoserine (serine 250).

The protein belongs to the PPase family. As to quaternary structure, homodimer. Mg(2+) serves as cofactor.

The protein localises to the cytoplasm. The catalysed reaction is diphosphate + H2O = 2 phosphate + H(+). This Pongo abelii (Sumatran orangutan) protein is Inorganic pyrophosphatase (PPA1).